Here is a 221-residue protein sequence, read N- to C-terminus: Phosphatidylserine decarboxylase proenzyme (221 aa).

The Schiff-base intermediate with substrate; via pyruvic acid role is filled by Ser-189. Ser-189 is modified (pyruvic acid (Ser); by autocatalysis).

The protein belongs to the phosphatidylserine decarboxylase family. PSD-A subfamily. In terms of assembly, heterodimer of a large membrane-associated beta subunit and a small pyruvoyl-containing alpha subunit. Pyruvate serves as cofactor. Post-translationally, is synthesized initially as an inactive proenzyme. Formation of the active enzyme involves a self-maturation process in which the active site pyruvoyl group is generated from an internal serine residue via an autocatalytic post-translational modification. Two non-identical subunits are generated from the proenzyme in this reaction, and the pyruvate is formed at the N-terminus of the alpha chain, which is derived from the carboxyl end of the proenzyme. The post-translation cleavage follows an unusual pathway, termed non-hydrolytic serinolysis, in which the side chain hydroxyl group of the serine supplies its oxygen atom to form the C-terminus of the beta chain, while the remainder of the serine residue undergoes an oxidative deamination to produce ammonia and the pyruvoyl prosthetic group on the alpha chain.

It is found in the cell membrane. It carries out the reaction a 1,2-diacyl-sn-glycero-3-phospho-L-serine + H(+) = a 1,2-diacyl-sn-glycero-3-phosphoethanolamine + CO2. It participates in phospholipid metabolism; phosphatidylethanolamine biosynthesis; phosphatidylethanolamine from CDP-diacylglycerol: step 2/2. Functionally, catalyzes the formation of phosphatidylethanolamine (PtdEtn) from phosphatidylserine (PtdSer). The sequence is that of Phosphatidylserine decarboxylase proenzyme from Porphyromonas gingivalis (strain ATCC 33277 / DSM 20709 / CIP 103683 / JCM 12257 / NCTC 11834 / 2561).